The primary structure comprises 467 residues: MSSKDQILEKDKKETDDNGNKKTTTTTSSSSSSSSSSKPRSNKFDKVIIKSNGVCYITEGVIGNGSFGVVTQAIVADTKEVVAIKKVLQDQRYKNRELQIMKMLNHINIVSLKNSFYTSDNDEVYLNLVLEYVPDTVYRVSRHYSMSKQPVPNIFVKLYIYQLCRSINYIHSLGICHRDIKPQNLLLDTSTSTLKLCDFGSAKILIKGETNVSYICSRHYRAPELIFGSTNYTTTIDVWSLGCVLAELLLGQPLFPGENGIDQLVEIIKVLGTPTKEQIHAMNPYYTSFKFPEIKANPWPRVFKAKDVPAESIDLISKILLYDPSSRLKPVEICAHPFFDELRDPKTCLPDGKPLPPLFNFTIAEQTSIGPKLAKTLIPSHAMNQIELPSPLFPNLAISSSNQSSSSNSNANVSSNLNSHSASPSTTSSSSSTPNSIPVQSPSTTNTTSSTTNNTTTTTTTTTTSNH.

Residues 1 to 20 (MSSKDQILEKDKKETDDNGN) are compositionally biased toward basic and acidic residues. Residues 1 to 42 (MSSKDQILEKDKKETDDNGNKKTTTTTSSSSSSSSSSKPRSN) form a disordered region. Positions 23 to 37 (TTTTTSSSSSSSSSS) are enriched in low complexity. The region spanning 56-339 (YITEGVIGNG…PVEICAHPFF (284 aa)) is the Protein kinase domain. ATP is bound by residues 62–70 (IGNGSFGVV) and lysine 85. Aspartate 179 acts as the Proton acceptor in catalysis. Phosphotyrosine; by zakA occurs at positions 214 and 220. A disordered region spans residues 400–467 (SSNQSSSSNS…TTTTTTTSNH (68 aa)).

Belongs to the protein kinase superfamily. CMGC Ser/Thr protein kinase family. GSK-3 subfamily. Requires Mg(2+) as cofactor.

The enzyme catalyses L-seryl-[tau protein] + ATP = O-phospho-L-seryl-[tau protein] + ADP + H(+). It catalyses the reaction L-threonyl-[tau protein] + ATP = O-phospho-L-threonyl-[tau protein] + ADP + H(+). Inhibited by lithium. Lithium inhibition is competitive with respect to magnesium but non-competitive with respect to the peptide substrate. In terms of biological role, during cellular differentiation, may mediate an extracellular cyclic AMP stimulated signal transduction pathway that regulates prespore and prestalk B-cell proportions through inhibition of stalk cell formation and induction of prespore cell differentiation. The cAMP receptor carC appears to activate gskA via the tyrosine kinases zakA and zak2, to stimulate prespore differentiation, while carD appears to negatively regulate gskA, to promote prestalk formation. The polypeptide is Glycogen synthase kinase-3 (gskA) (Dictyostelium discoideum (Social amoeba)).